The primary structure comprises 828 residues: Periplasmic nitrate reductase (828 aa).

The segment at residues M1–A31 is a signal peptide (tat-type signal). In terms of domain architecture, 4Fe-4S Mo/W bis-MGD-type spans I39 to D95. [4Fe-4S] cluster is bound by residues C46, C49, C53, and C81. Residues K83, Q150, N175, C179, W212–M219, S243–H247, Q262–D264, M372, Q376, N482, S508–D509, K531, D558, and T718–T727 each bind Mo-bis(molybdopterin guanine dinucleotide). Position 794 (F794) interacts with substrate. N802 and K819 together coordinate Mo-bis(molybdopterin guanine dinucleotide).

The protein belongs to the prokaryotic molybdopterin-containing oxidoreductase family. NasA/NapA/NarB subfamily. In terms of assembly, component of the periplasmic nitrate reductase NapAB complex composed of NapA and NapB. It depends on [4Fe-4S] cluster as a cofactor. The cofactor is Mo-bis(molybdopterin guanine dinucleotide). In terms of processing, predicted to be exported by the Tat system. The position of the signal peptide cleavage has not been experimentally proven.

It is found in the periplasm. The catalysed reaction is 2 Fe(II)-[cytochrome] + nitrate + 2 H(+) = 2 Fe(III)-[cytochrome] + nitrite + H2O. Its function is as follows. Catalytic subunit of the periplasmic nitrate reductase complex NapAB. Receives electrons from NapB and catalyzes the reduction of nitrate to nitrite. The chain is Periplasmic nitrate reductase from Pectobacterium carotovorum subsp. carotovorum (strain PC1).